We begin with the raw amino-acid sequence, 451 residues long: Photosystem II CP43 reaction center protein (451 aa).

The Cytoplasmic segment spans residues A1–T46. The chlorophyll a site is built by W13, L27, and A30. The helical transmembrane segment at L47–A71 threads the bilayer. The Lumenal segment spans residues T72–A111. The chlorophyll a site is built by V92 and G106. A helical transmembrane segment spans residues I112–N133. The Cytoplasmic segment spans residues K134–A155. Position 138 (I138) interacts with chlorophyll a. A helical membrane pass occupies residues K156–T178. The Lumenal segment spans residues N179–T232. V211 and G225 together coordinate chlorophyll a. Residues T233–S253 form a helical membrane-spanning segment. Topologically, residues L254 to V268 are cytoplasmic. A helical membrane pass occupies residues W269–A290. Residues Q291 to G424 lie on the Lumenal side of the membrane. Residue E345 participates in [CaMn4O5] cluster binding. Residues L404, F415, and G418 each coordinate chlorophyll a. Residues R425–S449 traverse the membrane as a helical segment. Topologically, residues L450–D451 are cytoplasmic.

It belongs to the PsbB/PsbC family. PsbC subfamily. As to quaternary structure, PSII is composed of 1 copy each of membrane proteins PsbA, PsbB, PsbC, PsbD, PsbE, PsbF, PsbH, PsbI, PsbJ, PsbK, PsbL, PsbM, PsbT, PsbX, PsbY, PsbZ, Psb30/Ycf12, peripheral proteins PsbO, CyanoQ (PsbQ), PsbU, PsbV and a large number of cofactors. It forms dimeric complexes. Requires Binds multiple chlorophylls and provides some of the ligands for the Ca-4Mn-5O cluster of the oxygen-evolving complex. It may also provide a ligand for a Cl- that is required for oxygen evolution. PSII binds additional chlorophylls, carotenoids and specific lipids. as cofactor.

It localises to the cellular thylakoid membrane. Functionally, one of the components of the core complex of photosystem II (PSII). It binds chlorophyll and helps catalyze the primary light-induced photochemical processes of PSII. PSII is a light-driven water:plastoquinone oxidoreductase, using light energy to abstract electrons from H(2)O, generating O(2) and a proton gradient subsequently used for ATP formation. The sequence is that of Photosystem II CP43 reaction center protein from Thermostichus vulcanus (Synechococcus vulcanus).